Reading from the N-terminus, the 305-residue chain is tRNA-cytidine(32) 2-sulfurtransferase (305 aa).

The tract at residues 1–20 is disordered; the sequence is MTAVLPLPQPLADPAPRDPR. A PP-loop motif motif is present at residues 59 to 64; the sequence is SGGKDS. 3 residues coordinate [4Fe-4S] cluster: Cys-134, Cys-137, and Cys-225. The segment at 282–305 is disordered; it reads DAPSGLDPDPRAWLSAGHATHDSD.

It belongs to the TtcA family. As to quaternary structure, homodimer. The cofactor is Mg(2+). Requires [4Fe-4S] cluster as cofactor.

It localises to the cytoplasm. It catalyses the reaction cytidine(32) in tRNA + S-sulfanyl-L-cysteinyl-[cysteine desulfurase] + AH2 + ATP = 2-thiocytidine(32) in tRNA + L-cysteinyl-[cysteine desulfurase] + A + AMP + diphosphate + H(+). The protein operates within tRNA modification. Catalyzes the ATP-dependent 2-thiolation of cytidine in position 32 of tRNA, to form 2-thiocytidine (s(2)C32). The sulfur atoms are provided by the cysteine/cysteine desulfurase (IscS) system. This Xanthomonas axonopodis pv. citri (strain 306) protein is tRNA-cytidine(32) 2-sulfurtransferase.